Reading from the N-terminus, the 277-residue chain is 3-methyl-2-oxobutanoate hydroxymethyltransferase (277 aa).

Residues Asp-43 and Asp-82 each contribute to the Mg(2+) site. 3-methyl-2-oxobutanoate-binding positions include 43–44 (DS), Asp-82, and Lys-112. Residue Glu-114 participates in Mg(2+) binding. Glu-181 functions as the Proton acceptor in the catalytic mechanism.

It belongs to the PanB family. As to quaternary structure, homodecamer; pentamer of dimers. Mg(2+) is required as a cofactor.

It is found in the cytoplasm. It carries out the reaction 3-methyl-2-oxobutanoate + (6R)-5,10-methylene-5,6,7,8-tetrahydrofolate + H2O = 2-dehydropantoate + (6S)-5,6,7,8-tetrahydrofolate. Its pathway is cofactor biosynthesis; (R)-pantothenate biosynthesis; (R)-pantoate from 3-methyl-2-oxobutanoate: step 1/2. Catalyzes the reversible reaction in which hydroxymethyl group from 5,10-methylenetetrahydrofolate is transferred onto alpha-ketoisovalerate to form ketopantoate. The chain is 3-methyl-2-oxobutanoate hydroxymethyltransferase from Bacillus subtilis (strain 168).